The chain runs to 352 residues: Lipase chaperone (352 aa).

A helical membrane pass occupies residues 7-28 (LSLVAVVVAGGLTLYWRWPAAV).

It belongs to the lipase chaperone family.

The protein localises to the cell inner membrane. Functionally, may be involved in the folding of the extracellular lipase during its passage through the periplasm. The sequence is that of Lipase chaperone (lifO) from Pseudomonas wisconsinensis.